Reading from the N-terminus, the 175-residue chain is Major oleosin NAP-II (175 aa).

Residues 1–47 are polar; sequence RRDQYPRDRDQYSMIGRDRDKYSMIGRDRDQYNMYGRDYSKSRQIAK. Repeats lie at residues 17 to 26 and 27 to 36; these read RDRDKYSMIG and RDRDQYNMYG. The hydrophobic stretch occupies residues 48 to 119; the sequence is AVTAVTAGGS…AAITVFSWIY (72 aa). 3 consecutive transmembrane segments (helical) span residues 56-76, 78-98, and 99-119; these read GSLL…LTVA, PLLV…ALLI, and TGFL…SWIY. The interval 151-175 is disordered; sequence AQYYGQQQTGGEDDRDRTRGTQHTT.

This sequence belongs to the oleosin family.

Its subcellular location is the lipid droplet. The protein resides in the membrane. Functionally, may have a structural role to stabilize the lipid body during desiccation of the seed by preventing coalescence of the oil. Probably interacts with both lipid and phospholipid moieties of lipid bodies. May also provide recognition signals for specific lipase anchorage in lipolysis during seedling growth. The chain is Major oleosin NAP-II from Brassica napus (Rape).